Consider the following 150-residue polypeptide: UPF0336 protein SGR_2883 (150 aa).

In terms of domain architecture, MaoC-like spans 10–116 (RTYPPTPAYE…STIEAVKSLA (107 aa)).

The protein belongs to the UPF0336 family.

The chain is UPF0336 protein SGR_2883 from Streptomyces griseus subsp. griseus (strain JCM 4626 / CBS 651.72 / NBRC 13350 / KCC S-0626 / ISP 5235).